Consider the following 180-residue polypeptide: Large ribosomal subunit protein uL5 (180 aa).

The protein belongs to the universal ribosomal protein uL5 family. In terms of assembly, part of the 50S ribosomal subunit; part of the 5S rRNA/L5/L18/L25 subcomplex. Contacts the 5S rRNA and the P site tRNA. Forms a bridge to the 30S subunit in the 70S ribosome.

Its function is as follows. This is one of the proteins that bind and probably mediate the attachment of the 5S RNA into the large ribosomal subunit, where it forms part of the central protuberance. In the 70S ribosome it contacts protein S13 of the 30S subunit (bridge B1b), connecting the 2 subunits; this bridge is implicated in subunit movement. Contacts the P site tRNA; the 5S rRNA and some of its associated proteins might help stabilize positioning of ribosome-bound tRNAs. This Anaeromyxobacter dehalogenans (strain 2CP-1 / ATCC BAA-258) protein is Large ribosomal subunit protein uL5.